The chain runs to 200 residues: Small ribosomal subunit protein uS4 (200 aa).

The segment at 22-42 is disordered; sequence TGKELQKRPYPPGQHGPGQRR. The S4 RNA-binding domain maps to 92 to 152; it reads SRLDNLVYRL…EKSRNLQVIK (61 aa).

It belongs to the universal ribosomal protein uS4 family. Part of the 30S ribosomal subunit. Contacts protein S5. The interaction surface between S4 and S5 is involved in control of translational fidelity.

In terms of biological role, one of the primary rRNA binding proteins, it binds directly to 16S rRNA where it nucleates assembly of the body of the 30S subunit. With S5 and S12 plays an important role in translational accuracy. In Geobacillus stearothermophilus (Bacillus stearothermophilus), this protein is Small ribosomal subunit protein uS4 (rpsD).